We begin with the raw amino-acid sequence, 583 residues long: Interactor of constitutive active ROPs 2, chloroplastic (583 aa).

The N-terminal 55 residues, Met1–Val55, are a transit peptide targeting the chloroplast. Disordered regions lie at residues Met1–Ala80 and Glu101–Glu125. A compositionally biased stretch (polar residues) spans Ser34 to Pro52. Coiled-coil stretches lie at residues Gly74–Glu207 and Met238–Thr516. Positions Ala102–Lys115 are enriched in basic and acidic residues. Residues Leu518–Lys583 form a disordered region. The segment covering Ser519–Gly529 has biased composition (low complexity). Ser540 carries the phosphoserine modification.

It belongs to the ICR family. In terms of assembly, interacts with ARAC8, ARAC11 and KIN13A in vitro, but not with ICR1 or SEC3A.

It is found in the plastid. The protein localises to the chloroplast. In terms of biological role, acts as a scaffold, mediating interaction of ROPs with different proteins. The sequence is that of Interactor of constitutive active ROPs 2, chloroplastic (ICR2) from Arabidopsis thaliana (Mouse-ear cress).